The primary structure comprises 1355 residues: Collagen alpha-2(I) chain (1355 aa).

Residues 1–22 (MLSFVDLRSVLLLAVTLYLVTC) form the signal peptide. At glutamine 23 the chain carries Pyrrolidone carboxylic acid. The propeptide at 23–71 (QEVRRGPRGDKGPPGEQGPPGIPGRDGEDGLPGLPGPPGVPGLGGNFAA) is N-terminal propeptide. The span at 26–35 (RRGPRGDKGP) shows a compositional bias: basic and acidic residues. The tract at residues 26–1111 (RRGPRGDKGP…GDGGEYYRAD (1086 aa)) is disordered. Glutamine 72 is subject to Pyrrolidone carboxylic acid. Lysine 77 is modified (allysine). Over residues 99–108 (PGSQGFQGLP) the composition is skewed to low complexity. The segment covering 132-146 (AGEDGHPGKSGRPGE) has biased composition (basic and acidic residues). The residue at position 168 (lysine 168) is a 5-hydroxylysine; alternate. A glycan (O-linked (Gal...) hydroxylysine; alternate) is linked at lysine 168. A compositionally biased stretch (low complexity) spans 218 to 267 (PAGSAGSRGSDGSSGPVGPAGPIGSAGAPGLPGAPGAKGELGPAGNNGPT). The segment covering 276–290 (PGPPGSLGPAGPPGN) has biased composition (pro residues). The segment covering 291 to 303 (PGTNGVNGAKGTA) has biased composition (low complexity). Positions 304-322 (GLPGVGGAPGLPGGRGIPG) are enriched in gly residues. A compositionally biased stretch (low complexity) spans 327–336 (AGPSGARGLA). Composition is skewed to gly residues over residues 340–349 (GIAGGKGDTG) and 403–412 (GRAGGIGPAG). 2 stretches are compositionally biased toward low complexity: residues 413-426 (SRGS…RGPN) and 465-495 (EGRS…NGEP). Composition is skewed to gly residues over residues 523–532 (GPAGLGGATG) and 586–595 (GESGGAGPHG). Over residues 596–618 (PSGSRGPSGAPGPDGQKGEPGAA) the composition is skewed to low complexity. Positions 619 to 628 (GLNGGLGPSG) are enriched in gly residues. Low complexity-rich tracts occupy residues 659 to 675 (NPGR…AGAP), 687 to 701 (SGPA…PRGA), and 708 to 726 (AGPA…AGHT). Over residues 728–738 (AKGDRGAKGPK) the composition is skewed to basic and acidic residues. 2 stretches are compositionally biased toward low complexity: residues 741–767 (AGSP…STGA) and 776–788 (ATGF…RAGA). Residues 804–813 (PGKDGSRGPR) show a composition bias toward basic and acidic residues. Over residues 852-869 (AGPSGVLGARGILGLPGT) the composition is skewed to low complexity. Residues 874–883 (GLPGGPGSNG) show a composition bias toward gly residues. Composition is skewed to low complexity over residues 884 to 912 (EPGP…VGHS) and 947 to 966 (PSGL…AGKS). Positions 967 to 976 (GNRGEGGPSG) are enriched in gly residues. Basic and acidic residues predominate over residues 996–1014 (RGDKGEAGERGARGLDGRK). Residues 1019 to 1041 (LSGLPGPSGTPGETGPSGSVGPV) are compositionally biased toward low complexity. Positions 1080 to 1091 (AGPPGPPGPPGH) are enriched in pro residues. Positions 1093–1105 (GPSGGGYDGGDGG) are enriched in gly residues. Residues 1111-1355 (DQPERKPKDY…GFEIGPVCFK (245 aa)) constitute a propeptide, C-terminal propeptide. A Fibrillar collagen NC1 domain is found at 1120–1355 (YEVDATLKSL…GFEIGPVCFK (236 aa)). 3 cysteine pairs are disulfide-bonded: cysteine 1150–cysteine 1182, cysteine 1190–cysteine 1353, and cysteine 1261–cysteine 1306. Aspartate 1168, asparagine 1170, glutamine 1171, cysteine 1173, and aspartate 1176 together coordinate Ca(2+). N-linked (GlcNAc...) asparagine glycosylation is found at asparagine 1206 and asparagine 1256.

It belongs to the fibrillar collagen family. Trimers of one alpha 2(I) and two alpha 1(I) chains. Prolines at the third position of the tripeptide repeating unit (G-X-Y) are hydroxylated in some or all of the chains. In terms of tissue distribution, forms the fibrils of tendon, ligaments and bones. In bones the fibrils are mineralized with calcium hydroxyapatite.

Its subcellular location is the secreted. It is found in the extracellular space. The protein resides in the extracellular matrix. Type I collagen is a member of group I collagen (fibrillar forming collagen). The protein is Collagen alpha-2(I) chain (COL1A2) of Aquarana catesbeiana (American bullfrog).